A 539-amino-acid polypeptide reads, in one-letter code: Chaperonin GroEL (539 aa).

ATP-binding positions include 29–32, 86–90, Gly-413, 476–478, and Asp-492; these read TLGP, DGTTT, and NAA.

Belongs to the chaperonin (HSP60) family. In terms of assembly, forms a cylinder of 14 subunits composed of two heptameric rings stacked back-to-back. Interacts with the co-chaperonin GroES.

The protein localises to the cytoplasm. It carries out the reaction ATP + H2O + a folded polypeptide = ADP + phosphate + an unfolded polypeptide.. Its function is as follows. Together with its co-chaperonin GroES, plays an essential role in assisting protein folding. The GroEL-GroES system forms a nano-cage that allows encapsulation of the non-native substrate proteins and provides a physical environment optimized to promote and accelerate protein folding. This is Chaperonin GroEL from Parageobacillus thermoglucosidasius (Geobacillus thermoglucosidasius).